We begin with the raw amino-acid sequence, 1149 residues long: DNA-directed RNA polymerase III subunit RPC2 (1149 aa).

Zn(2+) contacts are provided by Cys1095, Cys1098, Cys1107, and Cys1110. The C4-type zinc finger occupies 1095 to 1110; that stretch reads CDKCGLMGYSGWCTTC.

This sequence belongs to the RNA polymerase beta chain family. As to quaternary structure, component of the RNA polymerase III (Pol III) complex consisting of 17 subunits.

It is found in the nucleus. The catalysed reaction is RNA(n) + a ribonucleoside 5'-triphosphate = RNA(n+1) + diphosphate. Functionally, DNA-dependent RNA polymerase catalyzes the transcription of DNA into RNA using the four ribonucleoside triphosphates as substrates. Second largest core component of RNA polymerase III which synthesizes small RNAs, such as 5S rRNA and tRNAs. Proposed to contribute to the polymerase catalytic activity and forms the polymerase active center together with the largest subunit. Pol III is composed of mobile elements and RPC2 is part of the core element with the central large cleft and probably a clamp element that moves to open and close the cleft. The sequence is that of DNA-directed RNA polymerase III subunit RPC2 (RET1) from Saccharomyces cerevisiae (strain ATCC 204508 / S288c) (Baker's yeast).